The primary structure comprises 711 residues: Catalase HPII (711 aa).

A compositionally biased stretch (basic and acidic residues) spans 1-10; it reads MPSKKTDAPK. The tract at residues 1–27 is disordered; it reads MPSKKTDAPKQSEAAGTQTPDRANTNA. Positions 14–27 are enriched in polar residues; it reads AAGTQTPDRANTNA. Catalysis depends on residues histidine 92 and asparagine 165. A heme-binding site is contributed by tyrosine 379.

The protein belongs to the catalase family. HPII subfamily. Requires heme as cofactor.

Its subcellular location is the cytoplasm. The enzyme catalyses 2 H2O2 = O2 + 2 H2O. In terms of biological role, decomposes hydrogen peroxide into water and oxygen; serves to protect cells from the toxic effects of hydrogen peroxide. In Pseudomonas putida (Arthrobacter siderocapsulatus), this protein is Catalase HPII (katE).